The chain runs to 64 residues: Large ribosomal subunit protein bL35 (64 aa).

The protein belongs to the bacterial ribosomal protein bL35 family.

The sequence is that of Large ribosomal subunit protein bL35 from Coxiella burnetii (strain RSA 331 / Henzerling II).